The sequence spans 480 residues: Acyl-coenzyme A synthetase ACSM6, mitochondrial (480 aa).

The transit peptide at 1 to 21 (MLGRFQPFSLVRSFRLGFEAC) directs the protein to the mitochondrion. ATP contacts are provided by residues 226 to 234 (TKGTTGAPK), 366 to 371 (EGYGQT), aspartate 453, and arginine 468.

It belongs to the ATP-dependent AMP-binding enzyme family. As to quaternary structure, monomer. Requires Mg(2+) as cofactor. Mn(2+) serves as cofactor.

The protein resides in the mitochondrion. The catalysed reaction is a medium-chain fatty acid + ATP + CoA = a medium-chain fatty acyl-CoA + AMP + diphosphate. Catalyzes the activation of fatty acids by CoA to produce an acyl-CoA, the first step in fatty acid metabolism. The protein is Acyl-coenzyme A synthetase ACSM6, mitochondrial (ACSM6) of Homo sapiens (Human).